Here is a 205-residue protein sequence, read N- to C-terminus: High frequency lysogenization protein HflD homolog (205 aa).

It belongs to the HflD family.

Its subcellular location is the cytoplasm. The protein localises to the cell inner membrane. This is High frequency lysogenization protein HflD homolog from Shewanella sp. (strain ANA-3).